The following is a 242-amino-acid chain: LexA repressor (242 aa).

A DNA-binding region (H-T-H motif) is located at residues 26–46; it reads FEEMKAALNLKSKSGIHRLIS. Residues S163 and K201 each act as for autocatalytic cleavage activity in the active site.

The protein belongs to the peptidase S24 family. As to quaternary structure, homodimer.

The enzyme catalyses Hydrolysis of Ala-|-Gly bond in repressor LexA.. In terms of biological role, represses a number of genes involved in the response to DNA damage (SOS response), including recA and lexA. In the presence of single-stranded DNA, RecA interacts with LexA causing an autocatalytic cleavage which disrupts the DNA-binding part of LexA, leading to derepression of the SOS regulon and eventually DNA repair. The sequence is that of LexA repressor from Granulibacter bethesdensis (strain ATCC BAA-1260 / CGDNIH1).